The sequence spans 146 residues: 3-dehydroquinate dehydratase (146 aa).

Y23 (proton acceptor) is an active-site residue. Residues N74, H80, and D87 each coordinate substrate. Catalysis depends on H100, which acts as the Proton donor. Residues I101–S102 and R111 contribute to the substrate site.

The protein belongs to the type-II 3-dehydroquinase family. Homododecamer.

It catalyses the reaction 3-dehydroquinate = 3-dehydroshikimate + H2O. It functions in the pathway metabolic intermediate biosynthesis; chorismate biosynthesis; chorismate from D-erythrose 4-phosphate and phosphoenolpyruvate: step 3/7. Its function is as follows. Catalyzes a trans-dehydration via an enolate intermediate. This Bacillus cytotoxicus (strain DSM 22905 / CIP 110041 / 391-98 / NVH 391-98) protein is 3-dehydroquinate dehydratase.